The following is a 239-amino-acid chain: MSTLFVADIHLCAQEPAITAGFLHFLRTRAIAAQALYILGDLFEVWIGDDDPNPLHHEIAVALQALTQRGIPCYFIHGNRDFLLGKRYAAACGITLLPAQRVMQLDELRVVILHGDTLCTDDNDYQRFRRRVHQRWLQRLFLSLPLQLRLRIADRMRANSLRANAGKTADIMDINAQAVMAVMDDTGATVMIHGHTHRPAIHQLPGERRRAVLGAWHHQGSAIEVSTSGVMLHEFSFGG.

Mn(2+) contacts are provided by D8, H10, D41, N79, and H114. 79–80 (NR) serves as a coordination point for substrate. Residues D122, S160, N164, K167, and H195 each coordinate substrate. H195 and H197 together coordinate Mn(2+).

The protein belongs to the LpxH family. Mn(2+) is required as a cofactor.

The protein localises to the cell inner membrane. It catalyses the reaction UDP-2-N,3-O-bis[(3R)-3-hydroxytetradecanoyl]-alpha-D-glucosamine + H2O = 2-N,3-O-bis[(3R)-3-hydroxytetradecanoyl]-alpha-D-glucosaminyl 1-phosphate + UMP + 2 H(+). It functions in the pathway glycolipid biosynthesis; lipid IV(A) biosynthesis; lipid IV(A) from (3R)-3-hydroxytetradecanoyl-[acyl-carrier-protein] and UDP-N-acetyl-alpha-D-glucosamine: step 4/6. Functionally, hydrolyzes the pyrophosphate bond of UDP-2,3-diacylglucosamine to yield 2,3-diacylglucosamine 1-phosphate (lipid X) and UMP by catalyzing the attack of water at the alpha-P atom. Involved in the biosynthesis of lipid A, a phosphorylated glycolipid that anchors the lipopolysaccharide to the outer membrane of the cell. This Sodalis glossinidius (strain morsitans) protein is UDP-2,3-diacylglucosamine hydrolase.